A 1733-amino-acid polypeptide reads, in one-letter code: ATP-binding cassette sub-family A member 17 (1733 aa).

The next 7 helical transmembrane spans lie at 22–42 (TLITLLEMLMPLLFCAIVLYL), 262–282 (FPLLLMLSFICVELIITNSVL), 306–326 (AWFITFFISVSITVSVMTVLF), 342–362 (TLIFIFLMCFAIATIFFAFMM), 372–392 (GTVIGGTVFFFTYLPYMYITF), 403–423 (ILSCLFSNVAMATGVRFISLF), and 444–464 (FAQVLGMLLLDSFLYCLIAFL). The ABC transporter 1 domain occupies 519 to 752 (IEIQHLYKVF…YGAGYYMTII (234 aa)). 555 to 562 (GHNGAGKT) provides a ligand contact to ATP. A glycan (N-linked (GlcNAc...) asparagine) is linked at Asn609. 7 consecutive transmembrane segments (helical) span residues 906–926 (LVLSVQVLLPLAIIMLSLTFF), 1082–1102 (LVVNFLFGIAFLSSSFSILTV), 1128–1148 (LLWDLISFLVPTLLLVLVFLW), 1160–1180 (IPAVVLIMMLYGWAVIPLVYT), 1192–1212 (CVKLVVMLTFLSISPVVLVTV), 1230–1250 (IFLILPGHCLGMALSNLYYNF), and 1287–1307 (IGKYLTALAVLGPVYITMLFL). Residues 1366–1599 (LVVKEVSKVY…FGISYSLQAK (234 aa)) enclose the ABC transporter 2 domain. 1401–1408 (GLNGAGKT) is an ATP binding site. Polar residues predominate over residues 1681 to 1692 (ESSTKEQIQQEQ). Positions 1681-1733 (ESSTKEQIQQEQAVLASPSPPSNSRPISSPPSRLSSPTPKPLPSPPPSEPILL) are disordered. The span at 1704 to 1717 (SRPISSPPSRLSSP) shows a compositional bias: low complexity. Pro residues predominate over residues 1718-1733 (TPKPLPSPPPSEPILL).

It belongs to the ABC transporter superfamily. ABCA family. N-glycosylated. In terms of tissue distribution, in the testis, detected predominantly in elongated spermatids at the late stage of germ cell development and in sperm, with no expression detected in immature germ cells such as spermatogonia and spermatocytes or in somatic cells such as Sertoli cells (at protein level). Expressed in the head and tail midpiece of elongated spermatids and sperm (at protein level). Expressed exclusively in the testis.

It localises to the endoplasmic reticulum membrane. Its subcellular location is the cytoplasm. The enzyme catalyses cholesterol(in) + ATP + H2O = cholesterol(out) + ADP + phosphate + H(+). Promotes cholesterol efflux from sperm which renders sperm capable of fertilization. Has also been shown to decrease levels of intracellular esterified neutral lipids including cholesteryl esters, fatty acid esters and triacylglycerols. This chain is ATP-binding cassette sub-family A member 17, found in Mus musculus (Mouse).